The primary structure comprises 869 residues: Rho GTPase-activating protein 27 (869 aa).

The region spanning 6–69 (EGDVYVLVEH…PAQYVRELPA (64 aa)) is the SH3 domain. The segment at 104–137 (GADGSSAEPRGRASSLCGPARQRTSGQRNSLAPG) is disordered. 3 positions are modified to phosphoserine: serine 155, serine 215, and serine 249. 2 consecutive WW domains span residues 246–280 (PRLS…SPFE) and 299–333 (ESLE…DETE). 3 disordered regions span residues 275–299 (WESP…GSGE), 331–389 (ETEE…DLGP), and 447–474 (VPVP…PEEK). The span at 331 to 343 (ETEELEDDPEEQL) shows a compositional bias: acidic residues. Over residues 345 to 356 (MQPSLSPRSPGQ) the composition is skewed to polar residues. Serine 350 carries the phosphoserine modification. In terms of domain architecture, WW 3 spans 414–447 (QFTQEQWVRLEDQEGKPYFYNPEDSSVQWELPQV). Serine 459 and serine 462 each carry phosphoserine. The residue at position 464 (threonine 464) is a Phosphothreonine. Phosphoserine is present on serine 469. The 117-residue stretch at 477–593 (TLDKAGVLHR…WHKAIAEGIE (117 aa)) folds into the PH domain. Positions 598 to 644 (DLPQREEGEPSSADFGSSERLGSWKEEDVRPNAASPSLNPGSQESDL) are disordered. Positions 631–642 (ASPSLNPGSQES) are enriched in polar residues. At serine 632 the chain carries Phosphoserine. Positions 677–866 (CALAQLCERE…LILHQCADIF (190 aa)) constitute a Rho-GAP domain.

Interacts with SH3KBP1/CIN85.

Its subcellular location is the cytoplasm. The protein localises to the membrane. Rho GTPase-activating protein which may be involved in clathrin-mediated endocytosis. GTPase activators for the Rho-type GTPases act by converting them to an inactive GDP-bound state. Has activity toward CDC42 and RAC1. This Rattus norvegicus (Rat) protein is Rho GTPase-activating protein 27 (Arhgap27).